Here is a 289-residue protein sequence, read N- to C-terminus: ATP phosphoribosyltransferase (289 aa).

The protein belongs to the ATP phosphoribosyltransferase family. Long subfamily. Mg(2+) is required as a cofactor.

The protein resides in the cytoplasm. It catalyses the reaction 1-(5-phospho-beta-D-ribosyl)-ATP + diphosphate = 5-phospho-alpha-D-ribose 1-diphosphate + ATP. It participates in amino-acid biosynthesis; L-histidine biosynthesis; L-histidine from 5-phospho-alpha-D-ribose 1-diphosphate: step 1/9. Its activity is regulated as follows. Feedback inhibited by histidine. Functionally, catalyzes the condensation of ATP and 5-phosphoribose 1-diphosphate to form N'-(5'-phosphoribosyl)-ATP (PR-ATP). Has a crucial role in the pathway because the rate of histidine biosynthesis seems to be controlled primarily by regulation of HisG enzymatic activity. In Methanosarcina barkeri (strain Fusaro / DSM 804), this protein is ATP phosphoribosyltransferase.